The sequence spans 292 residues: uncharacterized protein (292 aa).

The first 21 residues, 1–21 (MNSNSNKKRDPARFPAGVAQG), serve as a signal peptide directing secretion. The disordered stretch occupies residues 1-30 (MNSNSNKKRDPARFPAGVAQGCSTTRAGDL).

This is an uncharacterized protein from Treponema pallidum (strain Nichols).